The sequence spans 351 residues: Ca(2+)/H(+) antiporter ChaA (351 aa).

11 helical membrane passes run 4-24 (IFFI…LMHW), 25-45 (PSAV…SYMG), 59-79 (IGGL…SLFA), 86-106 (GIVL…VAGL), 130-150 (GLLI…SVGM), 156-176 (LNLS…ALYF), 205-225 (VATI…ENLV), 241-261 (FIGV…SAII), 282-302 (IAMF…TSMP), 303-323 (LVFT…MIAI), and 331-351 (WFEG…FFLL).

The protein belongs to the Ca(2+):cation antiporter (CaCA) (TC 2.A.19) family. Cation/proton exchanger (CAX) subfamily. In terms of assembly, homotrimer.

The protein resides in the cell membrane. Calcium efflux is tightly regulated by intracellular pH. Its function is as follows. Ca(+)/H(+) antiporter that extrudes calcium in exchange for external protons. Does not transport sodium or potassium. This Bacillus subtilis (strain 168) protein is Ca(2+)/H(+) antiporter ChaA (chaA).